Consider the following 420-residue polypeptide: ATP phosphoribosyltransferase regulatory subunit (420 aa).

It belongs to the class-II aminoacyl-tRNA synthetase family. HisZ subfamily. As to quaternary structure, heteromultimer composed of HisG and HisZ subunits.

The protein localises to the cytoplasm. The protein operates within amino-acid biosynthesis; L-histidine biosynthesis; L-histidine from 5-phospho-alpha-D-ribose 1-diphosphate: step 1/9. In terms of biological role, required for the first step of histidine biosynthesis. May allow the feedback regulation of ATP phosphoribosyltransferase activity by histidine. The protein is ATP phosphoribosyltransferase regulatory subunit of Synechococcus sp. (strain ATCC 27144 / PCC 6301 / SAUG 1402/1) (Anacystis nidulans).